The primary structure comprises 372 residues: MGVKGLNQLIKEHSPSAYKEFQLKNLFGRKVAIDASMCLYQFLIAVRQSDGQQLTNEDGETTSHLSGMFYRTIKMVENNIKPVYVFDGKPPVLKGGELEKRLLRREEAQKQKTALGDEGTVEEVLKFEKRLVRVTREQNEEAKKLLQLMGIPCVDAPCEAEAQCAELARGGKVYAAASEDMDTLCYEPPFLLRHLTFSEARKMPIDQIEYKDAIAGLDMTKEQFIDLCILLGCDYCESIKGIGQATAFKLIKEHGSLDNIVEWIKNNKTKYTLPENWPFDEARQLFMNPEVTNASEISLKWKEPDVDGLIEFMVKQKGFSEDRIRSGAEKLKKGLKGGVQGRLDGFFKVVKTDDKKRKADPKESKASKKKKK.

The N-domain stretch occupies residues 1-105 (MGVKGLNQLI…GELEKRLLRR (105 aa)). Residue Asp34 coordinates Mg(2+). DNA-binding residues include Arg47 and Arg71. Asp87, Glu159, Glu161, Asp180, and Asp182 together coordinate Mg(2+). The tract at residues 123 to 254 (EVLKFEKRLV…ATAFKLIKEH (132 aa)) is I-domain. Glu159 is a DNA binding site. DNA is bound by residues Gly232 and Asp234. Asp234 is a Mg(2+) binding site. Positions 339–347 (VQGRLDGFF) are interaction with PCNA. Basic and acidic residues predominate over residues 353–366 (DDKKRKADPKESKA). The disordered stretch occupies residues 353–372 (DDKKRKADPKESKASKKKKK).

This sequence belongs to the XPG/RAD2 endonuclease family. FEN1 subfamily. As to quaternary structure, interacts with PCNA. Three molecules of RAD27 bind to one PCNA trimer with each molecule binding to one PCNA monomer. PCNA stimulates the nuclease activity without altering cleavage specificity. It depends on Mg(2+) as a cofactor. In terms of processing, phosphorylated. Phosphorylation upon DNA damage induces relocalization to the nuclear plasma.

The protein resides in the nucleus. The protein localises to the nucleolus. Its subcellular location is the nucleoplasm. It localises to the mitochondrion. In terms of biological role, structure-specific nuclease with 5'-flap endonuclease and 5'-3' exonuclease activities involved in DNA replication and repair. During DNA replication, cleaves the 5'-overhanging flap structure that is generated by displacement synthesis when DNA polymerase encounters the 5'-end of a downstream Okazaki fragment. It enters the flap from the 5'-end and then tracks to cleave the flap base, leaving a nick for ligation. Also involved in the long patch base excision repair (LP-BER) pathway, by cleaving within the apurinic/apyrimidinic (AP) site-terminated flap. Acts as a genome stabilization factor that prevents flaps from equilibrating into structures that lead to duplications and deletions. Also possesses 5'-3' exonuclease activity on nicked or gapped double-stranded DNA, and exhibits RNase H activity. Also involved in replication and repair of rDNA and in repairing mitochondrial DNA. The chain is Flap endonuclease 1 from Candida albicans (strain WO-1) (Yeast).